The primary structure comprises 479 residues: Ribosomal RNA small subunit methyltransferase F (479 aa).

S-adenosyl-L-methionine-binding positions include 125-131, E149, D176, and D194; that span reads AAAPGSK. Residue C247 is the Nucleophile of the active site.

It belongs to the class I-like SAM-binding methyltransferase superfamily. RsmB/NOP family.

It is found in the cytoplasm. The catalysed reaction is cytidine(1407) in 16S rRNA + S-adenosyl-L-methionine = 5-methylcytidine(1407) in 16S rRNA + S-adenosyl-L-homocysteine + H(+). Its function is as follows. Specifically methylates the cytosine at position 1407 (m5C1407) of 16S rRNA. The sequence is that of Ribosomal RNA small subunit methyltransferase F from Salmonella schwarzengrund (strain CVM19633).